A 353-amino-acid chain; its full sequence is GTPase Obg (353 aa).

Positions 1–159 (MKFLDEAKVY…RWIWLRLKLI (159 aa)) constitute an Obg domain. An OBG-type G domain is found at 160-327 (ADAGLVGLPN…ALRALVAVIG (168 aa)). GTP contacts are provided by residues 166-173 (GLPNAGKS), 191-195 (FTTLH), 212-215 (DIPG), 279-282 (NKID), and 308-310 (SGV). Residues S173 and T193 each coordinate Mg(2+).

It belongs to the TRAFAC class OBG-HflX-like GTPase superfamily. OBG GTPase family. In terms of assembly, monomer. Mg(2+) is required as a cofactor.

It localises to the cytoplasm. In terms of biological role, an essential GTPase which binds GTP, GDP and possibly (p)ppGpp with moderate affinity, with high nucleotide exchange rates and a fairly low GTP hydrolysis rate. Plays a role in control of the cell cycle, stress response, ribosome biogenesis and in those bacteria that undergo differentiation, in morphogenesis control. This chain is GTPase Obg, found in Rhodopseudomonas palustris (strain ATCC BAA-98 / CGA009).